We begin with the raw amino-acid sequence, 172 residues long: Adenine phosphoribosyltransferase (172 aa).

Belongs to the purine/pyrimidine phosphoribosyltransferase family. As to quaternary structure, homodimer.

The protein localises to the cytoplasm. It catalyses the reaction AMP + diphosphate = 5-phospho-alpha-D-ribose 1-diphosphate + adenine. Its pathway is purine metabolism; AMP biosynthesis via salvage pathway; AMP from adenine: step 1/1. Functionally, catalyzes a salvage reaction resulting in the formation of AMP, that is energically less costly than de novo synthesis. The chain is Adenine phosphoribosyltransferase from Alkaliphilus oremlandii (strain OhILAs) (Clostridium oremlandii (strain OhILAs)).